A 637-amino-acid chain; its full sequence is Chaperone protein HtpG (637 aa).

Residues 1-345 (MSQQETHGFQ…SNDLPLNVSR (345 aa)) form an a; substrate-binding region. Residues 346–562 (EILQDNHITK…EGEMSSQMIK (217 aa)) are b. Residues 563–637 (LMQAAGQPVP…MNQMLLANLK (75 aa)) form a c region.

This sequence belongs to the heat shock protein 90 family. As to quaternary structure, homodimer.

It localises to the cytoplasm. In terms of biological role, molecular chaperone. Has ATPase activity. The polypeptide is Chaperone protein HtpG (Shewanella sp. (strain MR-7)).